The following is a 220-amino-acid chain: uncharacterized protein (220 aa).

The helical transmembrane segment at 20–42 (FFKKLVPIIIIISIVVITIMVII) threads the bilayer.

The protein localises to the membrane. This is an uncharacterized protein from Rickettsia prowazekii (strain Madrid E).